The following is a 446-amino-acid chain: Packaging protein 1 (446 aa).

The segment at 1 to 72 (MEEKAGLRHL…SQVSKSKKQR (72 aa)) is disordered. Positions 10–21 (LQNQQNEPSQDP) are enriched in polar residues. A compositionally biased stretch (basic and acidic residues) spans 32–43 (HSDRNHLNKEAE). 170–177 (GPTGCGKS) is an ATP binding site. The tract at residues 439 to 446 (RYYHSKKK) is DNA-binding.

Belongs to the adenoviridae packaging protein 1 family. As to quaternary structure, homodimer. Part of a genome packaging complex composed of packaging proteins 1, 2 and 3; this complex specifically binds to the packaging sequence on the left end of viral genomic DNA and performs packaging of the viral genome. Interacts with protein 33K.

It localises to the virion. Its subcellular location is the host nucleus. The protein resides in the host nucleoplasm. It is found in the host nucleolus. Its function is as follows. Component of the packaging machinery which encapsidates the viral DNA into preformed capsids and transcriptional activator of the viral major late promoter (MLP). Binds, along with packaging proteins 2 and 3, to the specific packaging sequence on the left end of viral genomic DNA and displays ATPase activity thereby providing the power stroke of the packaging machinery. The activity of packaging protein IVa2 is stimulated by protein 33K which acts as a terminase. May be the protein that pumps DNA into the capsid powered by ATP hydrolysis. Specifically binds to the 5'-CG-3' nucleotides of the repeats making up the packaging sequence. Component of the DEF-A and DEF-B transcription factors that bind downstream elements of the major late promoter (MLP), and stimulate transcription from the MLP after initiation of viral DNA replication. DEF-A is a heterodimer packaging proteins 1 and 2 and DEF-B is a homodimer of packaging protein 1. The sequence is that of Packaging protein 1 from Canine adenovirus serotype 1 (strain CLL) (CAdV-1).